Here is a 292-residue protein sequence, read N- to C-terminus: Nitrogenase iron protein (292 aa).

10-17 (GKGGIGKS) contributes to the ATP binding site. Residue Cys98 coordinates [4Fe-4S] cluster. Residue Arg101 is modified to ADP-ribosylarginine; by dinitrogenase reductase ADP-ribosyltransferase. [4Fe-4S] cluster is bound at residue Cys133.

It belongs to the NifH/BchL/ChlL family. In terms of assembly, homodimer. [4Fe-4S] cluster serves as cofactor. The reversible ADP-ribosylation of Arg-101 inactivates the nitrogenase reductase and regulates nitrogenase activity.

The enzyme catalyses N2 + 8 reduced [2Fe-2S]-[ferredoxin] + 16 ATP + 16 H2O = H2 + 8 oxidized [2Fe-2S]-[ferredoxin] + 2 NH4(+) + 16 ADP + 16 phosphate + 6 H(+). In terms of biological role, the key enzymatic reactions in nitrogen fixation are catalyzed by the nitrogenase complex, which has 2 components: the iron protein and the molybdenum-iron protein. This is Nitrogenase iron protein from Teredinibacter turnerae (strain ATCC 39867 / T7901).